The chain runs to 421 residues: Vasopressin V1b receptor (421 aa).

Residues 1–35 (MDSEPSWTATPSPGGTLFVPNTTTPWLGRDEELAK) are Extracellular-facing. The N-linked (GlcNAc...) asparagine glycan is linked to N21. A helical transmembrane segment spans residues 36–59 (VEIGILATVLVLATGGNLAVLLIL). The Cytoplasmic segment spans residues 60–71 (GLQGHKRSRMHL). The chain crosses the membrane as a helical span at residues 72–93 (FVLHLALTDLGVALFQVLPQLL). The Extracellular segment spans residues 94–108 (WDITYRFQGSDLLCR). C107 and C186 are oxidised to a cystine. Residues 109 to 130 (AVKYLQVLSMFASTYMLLAMTL) traverse the membrane as a helical segment. Residues 131–151 (DRYLAVCHPLRSLQQPSQSTY) are Cytoplasmic-facing. A helical transmembrane segment spans residues 152–173 (PLIAAPWLLAAILSLPQVFIFS). The Extracellular segment spans residues 174 to 202 (LREVIQGSGVLDCWADFYFSWGPRAYITW). The chain crosses the membrane as a helical span at residues 203 to 223 (TTMAIFVLPVVVLTACYGLIC). Over 224–280 (HEIYKNLKVKTQAGREERRGWPKSSSSAAAAATRGLPSRVSSISTISRAKIRTVKMT) the chain is Cytoplasmic. Residues 281-300 (FVIVLAYIACWAPFFSVQMW) form a helical membrane-spanning segment. Residues 301–318 (SVWDENAPNEDSTNVAFT) lie on the Extracellular side of the membrane. The chain crosses the membrane as a helical span at residues 319 to 338 (ISMLLGNLSSCCNPWIYMGF). Residues 339-421 (NSHLLPRSLS…GEATMETSIS (83 aa)) lie on the Cytoplasmic side of the membrane. The segment at 399 to 421 (KPAGSLKDLEQVDGEATMETSIS) is disordered.

It belongs to the G-protein coupled receptor 1 family. Vasopressin/oxytocin receptor subfamily.

The protein localises to the cell membrane. In terms of biological role, receptor for arginine vasopressin. The activity of this receptor is mediated by G proteins which activate a phosphatidyl-inositol-calcium second messenger system. The polypeptide is Vasopressin V1b receptor (Avpr1b) (Mus musculus (Mouse)).